A 549-amino-acid chain; its full sequence is ATP synthase subunit alpha (549 aa).

An ATP-binding site is contributed by 172 to 179 (GDRKTGKT). The interval 513–549 (SSTGESVVPDEHVEAMDEEDLGKESVKVKKPAPQKKK) is disordered. Residues 540-549 (VKKPAPQKKK) are compositionally biased toward basic residues.

The protein belongs to the ATPase alpha/beta chains family. In terms of assembly, F-type ATPases have 2 components, CF(1) - the catalytic core - and CF(0) - the membrane proton channel. CF(1) has five subunits: alpha(3), beta(3), gamma(1), delta(1), epsilon(1). CF(0) has three main subunits: a(1), b(2) and c(9-12). The alpha and beta chains form an alternating ring which encloses part of the gamma chain. CF(1) is attached to CF(0) by a central stalk formed by the gamma and epsilon chains, while a peripheral stalk is formed by the delta and b chains.

The protein resides in the cell membrane. The catalysed reaction is ATP + H2O + 4 H(+)(in) = ADP + phosphate + 5 H(+)(out). Its function is as follows. Produces ATP from ADP in the presence of a proton gradient across the membrane. The alpha chain is a regulatory subunit. This chain is ATP synthase subunit alpha, found in Mycobacterium marinum (strain ATCC BAA-535 / M).